A 306-amino-acid chain; its full sequence is Flavin adenine dinucleotide synthase (306 aa).

Residues S59, I107, G164, 182–185 (DSNW), R190, and R300 contribute to the FAD site.

The protein belongs to the PAPS reductase family. FAD1 subfamily.

Its subcellular location is the cytoplasm. It carries out the reaction FMN + ATP + H(+) = FAD + diphosphate. The protein operates within cofactor biosynthesis; FAD biosynthesis; FAD from FMN: step 1/1. Catalyzes the adenylation of flavin mononucleotide (FMN) to form flavin adenine dinucleotide (FAD) coenzyme. In Saccharomyces cerevisiae (strain ATCC 204508 / S288c) (Baker's yeast), this protein is Flavin adenine dinucleotide synthase.